The primary structure comprises 532 residues: E3 ubiquitin-protein ligase MGRN1 (532 aa).

Gly2 is lipidated: N-myristoyl glycine. The RING-type zinc finger occupies 277-316 (ECVVCLSDLRDTLILPCRHLCLCTSCADTLRYQANNCPIC). Positions 384–387 (PSAP) match the Required for TSG101-binding motif. Tyr389 carries the post-translational modification Phosphotyrosine. The interval 419-518 (LQKGKTQSKS…QPVPPADIYL (100 aa)) is disordered. Residues 422-435 (GKTQSKSPDSTLRS) show a composition bias toward polar residues. 4 positions are modified to phosphoserine: Ser428, Ser449, Ser452, and Ser501. The span at 442 to 453 (EEDEEKLSEDSD) shows a compositional bias: acidic residues.

As to quaternary structure, interacts with MC1R and MC4R. Interacts with TSG101. Interacts with mislocalized cytosolically exposed PRNP; this interaction alters MGRN1 subcellular location and causes lysosomal enlargement. Autoubiquitinated in vitro. In terms of tissue distribution, widely expressed, with highest levels in brain, heart, kidney and liver. In the CNS, especially prominent in the Purkinje cells of the cerebellum. In the skin, expressed in the basal layer of the epidermis and hair follicles, primarily in the outer root sheath. Isoforms 1, 3, 4 and 5 are equally expressed in the liver. Isoforms 1, 3 and 4 are most abundant in brain, kidney and heart, respectively.

The protein resides in the early endosome. It localises to the cytoplasm. The protein localises to the cell membrane. It is found in the nucleus. The enzyme catalyses S-ubiquitinyl-[E2 ubiquitin-conjugating enzyme]-L-cysteine + [acceptor protein]-L-lysine = [E2 ubiquitin-conjugating enzyme]-L-cysteine + N(6)-ubiquitinyl-[acceptor protein]-L-lysine.. It participates in protein modification; protein ubiquitination. Functionally, E3 ubiquitin-protein ligase. Mediates TSG101 monoubiquitination at multiple sites. Plays a role in the regulation of endosome-to-lysosome trafficking. Impairs MC1R- and MC4R-signaling by competing with GNAS-binding to MCRs and inhibiting agonist-induced cAMP production. Does not inhibit ADRB2-signaling. Does not promote MC1R ubiquitination. Also acts as a negative regulator of hedgehog signaling. The sequence is that of E3 ubiquitin-protein ligase MGRN1 (Mgrn1) from Mus musculus (Mouse).